Reading from the N-terminus, the 131-residue chain is Small ribosomal subunit protein uS8 (131 aa).

Belongs to the universal ribosomal protein uS8 family. Part of the 30S ribosomal subunit. Contacts proteins S5 and S12.

In terms of biological role, one of the primary rRNA binding proteins, it binds directly to 16S rRNA central domain where it helps coordinate assembly of the platform of the 30S subunit. The polypeptide is Small ribosomal subunit protein uS8 (Legionella pneumophila subsp. pneumophila (strain Philadelphia 1 / ATCC 33152 / DSM 7513)).